Reading from the N-terminus, the 359-residue chain is Alanine racemase, biosynthetic (359 aa).

Residue lysine 34 is the Proton acceptor; specific for D-alanine of the active site. Residue lysine 34 is modified to N6-(pyridoxal phosphate)lysine. Arginine 129 lines the substrate pocket. Tyrosine 255 acts as the Proton acceptor; specific for L-alanine in catalysis. Methionine 303 serves as a coordination point for substrate.

The protein belongs to the alanine racemase family. Monomer but homodimer in the presence of the substrate. Requires pyridoxal 5'-phosphate as cofactor.

The catalysed reaction is L-alanine = D-alanine. It functions in the pathway amino-acid biosynthesis; D-alanine biosynthesis; D-alanine from L-alanine: step 1/1. Its pathway is cell wall biogenesis; peptidoglycan biosynthesis. Catalyzes the interconversion of L-alanine and D-alanine. The polypeptide is Alanine racemase, biosynthetic (alr) (Shigella dysenteriae).